A 419-amino-acid polypeptide reads, in one-letter code: L-rhamnose isomerase (419 aa).

Positions 262, 294, and 296 each coordinate Mn(2+).

The protein belongs to the rhamnose isomerase family. As to quaternary structure, homotetramer. It depends on Mn(2+) as a cofactor.

The protein resides in the cytoplasm. The catalysed reaction is L-rhamnopyranose = L-rhamnulose. It functions in the pathway carbohydrate degradation; L-rhamnose degradation; glycerone phosphate from L-rhamnose: step 1/3. In terms of biological role, catalyzes the interconversion of L-rhamnose and L-rhamnulose. The protein is L-rhamnose isomerase of Escherichia coli O7:K1 (strain IAI39 / ExPEC).